Reading from the N-terminus, the 2111-residue chain is Mycocerosic acid synthase-like polyketide synthase (2111 aa).

The first 15 residues, 1 to 15, serve as a signal peptide directing secretion; that stretch reads MTQNCVAPVAIIGMA. The N-palmitoyl cysteine moiety is linked to residue Cys16. Cys16 is lipidated: S-diacylglycerol cysteine. One can recognise a Ketosynthase family 3 (KS3) domain in the interval 16–428; sequence CRLPGAINSP…GTNVHAVLEQ (413 aa). Cys178 (acyl-thioester intermediate; for beta-ketoacyl synthase activity) is an active-site residue. Residues His313 and His349 each act as for beta-ketoacyl synthase activity in the active site. Residues 430–537 are linker domain (LD); it reads PESPAETAAE…MPQQAVTNDD (108 aa). Residues 538 to 837 are acyltransferase (AT); it reads RGPVWVFSGQ…LAVFAAMRRQ (300 aa). The Acyl-ester intermediate; for acyltransferase activity role is filled by Ser629. The dehydratase (DH) stretch occupies residues 896-1176; sequence PSVSVHPLLG…LSAMGLQLGT (281 aa). Positions 901 to 1025 are N-terminal hotdog fold; it reads HPLLGSHVVL…GDVDAERPAA (125 aa). One can recognise a PKS/mFAS DH domain in the interval 901 to 1183; that stretch reads HPLLGSHVVL…LGTGNSDKAE (283 aa). Residue His934 is the Proton acceptor; for dehydratase activity of the active site. The interval 1036-1183 is C-terminal hotdog fold; the sequence is PNRVDGDELR…LGTGNSDKAE (148 aa). Asp1100 functions as the Proton donor; for dehydratase activity in the catalytic mechanism. The pseudo beta-ketoacyl reductase (PsiKR) stretch occupies residues 1215–1391; the sequence is SWLVILAGDD…SPEDETAWRD (177 aa). The tract at residues 1419-1743 is enoylreductase (ER); it reads EGMRLVVRNP…QHTGKLVIDI (325 aa). A beta-ketoacyl reductase (KR) region spans residues 1765–2008; the sequence is GAYVITGGLG…RSPFAELFLA (244 aa). Residues 1773-1776, 1796-1799, 1824-1825, and 1902-1903 each bind NADP(+); these read LGGL, SRSA, DI, and FS. The Carrier domain maps to 2029 to 2104; the sequence is EEWPTHLRRL…QRLCEMLDTD (76 aa). Ser2064 carries the post-translational modification O-(pantetheine 4'-phosphoryl)serine.

As to quaternary structure, homodimer.

The protein resides in the cell membrane. Its pathway is lipid metabolism; fatty acid biosynthesis. Polyketide synthase involved in the biosynthesis of 2,4-dimethyl-2-eicosenoic acid, a lipid component of the lipooligosaccharides (LOS) which are not located at the bacterial surface but rather in deeper compartments of the cell envelope of M.smegmatis. This Mycolicibacterium smegmatis (strain ATCC 700084 / mc(2)155) (Mycobacterium smegmatis) protein is Mycocerosic acid synthase-like polyketide synthase.